The primary structure comprises 660 residues: Methionine--tRNA ligase 1 (660 aa).

The 'HIGH' region signature appears at 15–25; sequence YYPSGKLHIGH. The short motif at 310–314 is the 'KMSKS' region element; that stretch reads KMSKS. Lysine 313 contributes to the ATP binding site. In terms of domain architecture, tRNA-binding spans 560–660; that stretch reads DFFKVELRVA…QNLPNGTKIK (101 aa).

This sequence belongs to the class-I aminoacyl-tRNA synthetase family. MetG type 2B subfamily. As to quaternary structure, homodimer.

It is found in the cytoplasm. The catalysed reaction is tRNA(Met) + L-methionine + ATP = L-methionyl-tRNA(Met) + AMP + diphosphate. In terms of biological role, is required not only for elongation of protein synthesis but also for the initiation of all mRNA translation through initiator tRNA(fMet) aminoacylation. The chain is Methionine--tRNA ligase 1 from Bacillus cereus (strain ATCC 14579 / DSM 31 / CCUG 7414 / JCM 2152 / NBRC 15305 / NCIMB 9373 / NCTC 2599 / NRRL B-3711).